Consider the following 458-residue polypeptide: NALCN channel auxiliary factor 1 (458 aa).

The chain crosses the membrane as a helical span at residues 40-60 (LSLASLLFFTVLLSDHLWFCA). The interval 70 to 155 (KEHQQQQRQQ…NRGKDDRGKA (86 aa)) is disordered. A compositionally biased stretch (low complexity) spans 75 to 96 (QQRQQQQQQQQQRQRQQQQQQR). Gly residues predominate over residues 136-145 (GDGGGGGGKG). 7 disulfides stabilise this stretch: cysteine 191-cysteine 261, cysteine 226-cysteine 313, cysteine 246-cysteine 261, cysteine 304-cysteine 341, cysteine 324-cysteine 377, cysteine 330-cysteine 376, and cysteine 334-cysteine 361. An N-linked (GlcNAc...) asparagine glycan is attached at asparagine 217. Residues 417-437 (LKLCVLVLILLHTVLTASAAQ) traverse the membrane as a helical segment.

It belongs to the NALF family. In terms of assembly, component of the NALCN channel complex. NALCN complex consists of NALCN and auxiliary subunits, UNC79, UNC80 and NACL1. These auxiliary subunits are essential for the NALCN channel function.

The protein localises to the cell membrane. Auxillary component of the NALCN sodium channel complex, a channel that regulates the resting membrane potential and controls neuronal excitability. In Homo sapiens (Human), this protein is NALCN channel auxiliary factor 1.